We begin with the raw amino-acid sequence, 427 residues long: Adenylosuccinate synthetase (427 aa).

Residues 12-18 and 40-42 each bind GTP; these read GDEGKGK and GHT. The active-site Proton acceptor is aspartate 13. Aspartate 13 and glycine 40 together coordinate Mg(2+). Residues 13-16, 38-41, threonine 128, arginine 142, glutamine 223, threonine 238, and arginine 302 each bind IMP; these read DEGK and NAGH. Catalysis depends on histidine 41, which acts as the Proton donor. 298–304 lines the substrate pocket; it reads TTTGRPR. Residues arginine 304, 330–332, and 412–414 contribute to the GTP site; these read SID and SVG.

It belongs to the adenylosuccinate synthetase family. Homodimer. It depends on Mg(2+) as a cofactor.

The protein resides in the cytoplasm. It catalyses the reaction IMP + L-aspartate + GTP = N(6)-(1,2-dicarboxyethyl)-AMP + GDP + phosphate + 2 H(+). It functions in the pathway purine metabolism; AMP biosynthesis via de novo pathway; AMP from IMP: step 1/2. In terms of biological role, plays an important role in the de novo pathway of purine nucleotide biosynthesis. Catalyzes the first committed step in the biosynthesis of AMP from IMP. This chain is Adenylosuccinate synthetase, found in Staphylococcus epidermidis (strain ATCC 12228 / FDA PCI 1200).